Reading from the N-terminus, the 467-residue chain is MNTNQDNGNQLQRTMKSRHLFMISLGGVIGTGFFLGTGFTINQAGPLGAVLSYLVGGFIMFLTMLCLGELAVAFPVSGSFQTYATKFISPAFGFAFGWLYWLGWAVTCAIEFLSAGQLMQRWFPHIDVWIWCLVFAALMFILNAITTKAFAESEFWFSGIKILIILLFIILGGAAMFGLIDLKGGEQAPFLTHFYEDGLFPNGIKAMLITMITVNFAFQGTELIGVAAGESEDPEKTIPRSIKQTVWRTLVFFVLSIIVIAGMIPWKQAGVVESPFVAVFEQIGIPYAADIMNFVILIALLSVANSGLYASTRILYAMANEGQAFKALGKTNQRGVPMYSLIVTMAVACLSLLTKFAQAETVYMVLLSLAGMSAQVGWITISLSQIMFRRKYIREGGKIEDLKFKTPLYPVLPLIGLTLNTVVLISLAFDPEQRIALYCGVPFMIICYIIYHVVIKKRQQANRQLEL.

12 helical membrane-spanning segments follow: residues 21–41 (FMIS…GFTI), 47–67 (LGAV…MLCL), 87–107 (FISP…WAVT), 122–142 (WFPH…MFIL), 162–182 (ILII…LIDL), 207–227 (MLIT…IGVA), 246–266 (VWRT…MIPW), 283–303 (IGIP…LLSV), 336–356 (VPMY…LTKF), 361–381 (TVYM…WITI), 409–429 (YPVL…SLAF), and 435–455 (IALY…HVVI).

This sequence belongs to the amino acid-polyamine-organocation (APC) superfamily. Amino acid transporter (AAT) (TC 2.A.3.1) family.

It localises to the cell membrane. Its function is as follows. Putative transport protein involved in arginine degradative pathway. Probably transports arginine or ornithine. The protein is Amino-acid permease RocE of Bacillus subtilis (strain 168).